The following is a 263-amino-acid chain: Taurine import ATP-binding protein TauB (263 aa).

Positions 4–235 constitute an ABC transporter domain; sequence LTAEAISLSF…RYAAGETVRS (232 aa). 40–47 is a binding site for ATP; the sequence is GPSGCGKS.

The protein belongs to the ABC transporter superfamily. Taurine importer (TC 3.A.1.17.1) family. In terms of assembly, the complex is composed of two ATP-binding proteins (TauB), two transmembrane proteins (TauC) and a solute-binding protein (TauA).

It localises to the cell inner membrane. The enzyme catalyses taurine(out) + ATP + H2O = taurine(in) + ADP + phosphate + H(+). In terms of biological role, part of the ABC transporter complex TauABC involved in taurine import. Responsible for energy coupling to the transport system. This is Taurine import ATP-binding protein TauB from Pseudomonas aeruginosa (strain ATCC 15692 / DSM 22644 / CIP 104116 / JCM 14847 / LMG 12228 / 1C / PRS 101 / PAO1).